Reading from the N-terminus, the 263-residue chain is Aminoglycoside (3'') (9) adenylyltransferase (263 aa).

The catalysed reaction is streptomycin + ATP = 3''-O-adenylylstreptomycin + diphosphate. The enzyme catalyses spectinomycin + ATP = 9-O-adenylylspectinomycin + diphosphate. Functionally, mediates bacterial resistance to the antibiotics streptomycin and spectinomycin. The sequence is that of Aminoglycoside (3'') (9) adenylyltransferase from Escherichia coli.